The sequence spans 416 residues: Putative competence-damage inducible protein (416 aa).

The protein belongs to the CinA family.

In Bacillus pumilus (strain SAFR-032), this protein is Putative competence-damage inducible protein.